The chain runs to 404 residues: Cysteine desulfurase IscS (404 aa).

Pyridoxal 5'-phosphate contacts are provided by residues 75–76, Asn-155, Gln-183, and 203–205; these read AT and SGH. Lys-206 bears the N6-(pyridoxal phosphate)lysine mark. Thr-243 is a binding site for pyridoxal 5'-phosphate. The Cysteine persulfide intermediate role is filled by Cys-328. Cys-328 serves as a coordination point for [2Fe-2S] cluster.

It belongs to the class-V pyridoxal-phosphate-dependent aminotransferase family. NifS/IscS subfamily. In terms of assembly, homodimer. Forms a heterotetramer with IscU, interacts with other sulfur acceptors. Pyridoxal 5'-phosphate is required as a cofactor.

It is found in the cytoplasm. It catalyses the reaction (sulfur carrier)-H + L-cysteine = (sulfur carrier)-SH + L-alanine. It functions in the pathway cofactor biosynthesis; iron-sulfur cluster biosynthesis. Its function is as follows. Master enzyme that delivers sulfur to a number of partners involved in Fe-S cluster assembly, tRNA modification or cofactor biosynthesis. Catalyzes the removal of elemental sulfur atoms from cysteine to produce alanine. Functions as a sulfur delivery protein for Fe-S cluster synthesis onto IscU, an Fe-S scaffold assembly protein, as well as other S acceptor proteins. The polypeptide is Cysteine desulfurase IscS (Shewanella amazonensis (strain ATCC BAA-1098 / SB2B)).